Consider the following 617-residue polypeptide: Probable Xaa-Pro aminopeptidase P (617 aa).

Mn(2+)-binding residues include aspartate 414, aspartate 425, glutamate 523, and glutamate 537.

Belongs to the peptidase M24B family. Mn(2+) is required as a cofactor.

The enzyme catalyses Release of any N-terminal amino acid, including proline, that is linked to proline, even from a dipeptide or tripeptide.. Functionally, catalyzes the removal of a penultimate prolyl residue from the N-termini of peptides. The protein is Probable Xaa-Pro aminopeptidase P (AMPP) of Ajellomyces capsulatus (strain NAm1 / WU24) (Darling's disease fungus).